The primary structure comprises 305 residues: Nucleotide-binding protein Rxyl_2009 (305 aa).

Residue 24 to 31 (GLSGAGKS) coordinates ATP. 75–78 (DIRG) provides a ligand contact to GTP.

It belongs to the RapZ-like family.

In terms of biological role, displays ATPase and GTPase activities. The protein is Nucleotide-binding protein Rxyl_2009 of Rubrobacter xylanophilus (strain DSM 9941 / JCM 11954 / NBRC 16129 / PRD-1).